Consider the following 361-residue polypeptide: Chorismate synthase (361 aa).

Residues Arg-48 and Arg-54 each coordinate NADP(+). Residues 125-127, 238-239, Gly-278, 293-297, and Arg-319 contribute to the FMN site; these read RSS, NA, and KPTSS.

This sequence belongs to the chorismate synthase family. Homotetramer. The cofactor is FMNH2.

The catalysed reaction is 5-O-(1-carboxyvinyl)-3-phosphoshikimate = chorismate + phosphate. The protein operates within metabolic intermediate biosynthesis; chorismate biosynthesis; chorismate from D-erythrose 4-phosphate and phosphoenolpyruvate: step 7/7. Its function is as follows. Catalyzes the anti-1,4-elimination of the C-3 phosphate and the C-6 proR hydrogen from 5-enolpyruvylshikimate-3-phosphate (EPSP) to yield chorismate, which is the branch point compound that serves as the starting substrate for the three terminal pathways of aromatic amino acid biosynthesis. This reaction introduces a second double bond into the aromatic ring system. This chain is Chorismate synthase, found in Salmonella dublin (strain CT_02021853).